A 312-amino-acid polypeptide reads, in one-letter code: Retron Ec83 reverse transcriptase (312 aa).

In terms of domain architecture, Reverse transcriptase spans 14–239 (PDFDVLLKSR…HNRHVTGVTL (226 aa)). Positions 97, 185, and 186 each coordinate Mg(2+).

It belongs to the bacterial reverse transcriptase family.

It carries out the reaction DNA(n) + a 2'-deoxyribonucleoside 5'-triphosphate = DNA(n+1) + diphosphate. Reverse transcriptase (RT) component of antiviral defense system retron Ec83, composed of a non-coding RNA (ncRNA), this reverse transcriptase (RT), a probable ATPase and a putative HNH endonuclease. Expression of retron Ec83 confers protection against bacteriophages T2, T4 and T6. At multiplicity of infection (MOI) of 0.02 cultures slow growth when infected with T4 but do not collapse, at MOI 2 cultures enter growth stasis. Responsible for synthesis of msDNA-Ec83 (a linear ssDNA with a 5'-terminal phosphate residue). Unlike most known msDNAs the mature product from the original strain does not have an RNA component. When the ncRNA plus RT are expressed in strain K12 / JM109 only linear DNA is seen in stationary phase cells, but logarithmic phase cells have both a linear and branched msDNA (a branched molecule with RNA linked by a 2',5'-phosphodiester bond to ssDNA, a 'classic' retron). The branched msDNA is probably the precursor for the mature linear msDNA, the precursor is cleaved endonucleolytically by ExoVII (xseA-xseB) leaving the observed mature 5'-phosphate ssDNA terminus. The retron transcript serves as primer (from a conserved internal G residue) and template for the reaction, and codes for the RT. Overexpression of the ncRNA and RT, which leads to increased levels of msDNA, is mutagenic in vivo. This may be due to a mismatch in the msDNA stem which binds and sequesters MutS and/or MutL. This chain is Retron Ec83 reverse transcriptase, found in Escherichia coli.